Consider the following 420-residue polypeptide: Serine--tRNA ligase (420 aa).

227 to 229 (TSE) is an L-serine binding site. Residues 258–260 (RRE) and valine 274 each bind ATP. Residue glutamate 281 participates in L-serine binding. 345–348 (EVTS) contacts ATP. Threonine 379 contacts L-serine.

This sequence belongs to the class-II aminoacyl-tRNA synthetase family. Type-1 seryl-tRNA synthetase subfamily. Homodimer. The tRNA molecule binds across the dimer.

The protein resides in the cytoplasm. The enzyme catalyses tRNA(Ser) + L-serine + ATP = L-seryl-tRNA(Ser) + AMP + diphosphate + H(+). It carries out the reaction tRNA(Sec) + L-serine + ATP = L-seryl-tRNA(Sec) + AMP + diphosphate + H(+). Its pathway is aminoacyl-tRNA biosynthesis; selenocysteinyl-tRNA(Sec) biosynthesis; L-seryl-tRNA(Sec) from L-serine and tRNA(Sec): step 1/1. Its function is as follows. Catalyzes the attachment of serine to tRNA(Ser). Is also able to aminoacylate tRNA(Sec) with serine, to form the misacylated tRNA L-seryl-tRNA(Sec), which will be further converted into selenocysteinyl-tRNA(Sec). In Acidothermus cellulolyticus (strain ATCC 43068 / DSM 8971 / 11B), this protein is Serine--tRNA ligase.